A 241-amino-acid polypeptide reads, in one-letter code: Small ribosomal subunit protein uS2 (241 aa).

It belongs to the universal ribosomal protein uS2 family.

This is Small ribosomal subunit protein uS2 from Pectobacterium carotovorum subsp. carotovorum (strain PC1).